Reading from the N-terminus, the 585-residue chain is NADP-reducing hydrogenase subunit HndD (585 aa).

The 2Fe-2S ferredoxin-type domain maps to 2–85 (SMLTITIDGK…NMVVKTNSLR (84 aa)). 4 residues coordinate [2Fe-2S] cluster: Cys36, Cys52, Cys55, and Cys69. Positions 85–124 (RVLNARRTVLELLLSDHPKDCLVCAKSGECELQTLAERFG) constitute a 4Fe-4S His(Cys)3-ligated-type domain. [4Fe-4S] cluster contacts are provided by His101, Cys105, Cys108, and Cys114. 2 4Fe-4S ferredoxin-type domains span residues 144 to 174 (ASII…VLSG) and 185 to 216 (PAFE…EHEY).

As to quaternary structure, heterotetramer composed of HndA, HndB, HndC and HndD subunits. HndD is probably the hydrogenase subunit. [4Fe-4S] cluster is required as a cofactor.

It carries out the reaction H2 + NADP(+) = NADPH + H(+). With respect to regulation, inhibited by oxygen. Catalyzes the reduction of NADP in the presence of molecular H(2) to yield NADPH. This chain is NADP-reducing hydrogenase subunit HndD (hndD), found in Solidesulfovibrio fructosivorans (Desulfovibrio fructosivorans).